A 186-amino-acid polypeptide reads, in one-letter code: Trafficking protein particle complex subunit 3 (186 aa).

The protein belongs to the TRAPP small subunits family. BET3 subfamily. As to quaternary structure, homodimer. Part of the multisubunit TRAPP (transport protein particle) complex.

It is found in the golgi apparatus. Its subcellular location is the cis-Golgi network. It localises to the endoplasmic reticulum. Its function is as follows. May play a role in vesicular transport from endoplasmic reticulum to Golgi. The protein is Trafficking protein particle complex subunit 3 (trappc3) of Dictyostelium discoideum (Social amoeba).